We begin with the raw amino-acid sequence, 250 residues long: Triosephosphate isomerase (250 aa).

9-11 is a binding site for substrate; the sequence is NWK. His95 functions as the Electrophile in the catalytic mechanism. Residue Glu167 is the Proton acceptor of the active site. Residues Gly173, Ser212, and 233–234 contribute to the substrate site; that span reads GG.

This sequence belongs to the triosephosphate isomerase family. Homodimer.

The protein localises to the cytoplasm. It catalyses the reaction D-glyceraldehyde 3-phosphate = dihydroxyacetone phosphate. The protein operates within carbohydrate biosynthesis; gluconeogenesis. It participates in carbohydrate degradation; glycolysis; D-glyceraldehyde 3-phosphate from glycerone phosphate: step 1/1. Its function is as follows. Involved in the gluconeogenesis. Catalyzes stereospecifically the conversion of dihydroxyacetone phosphate (DHAP) to D-glyceraldehyde-3-phosphate (G3P). This is Triosephosphate isomerase from Endomicrobium trichonymphae.